The chain runs to 131 residues: MSWQAYVDDRLMCDIDGHHLTAAAILGHDGSVWAHSSTFPKFKPEEITAIMKDFDEPGSLAPTGLHLGGTKYMVIQGEGGAVIRGKKGSGGVTVKKTGQALVFGIYEEPLTPGQCNMIVERLGDYLIDQGL.

The protein belongs to the profilin family. As to quaternary structure, occurs in many kinds of cells as a complex with monomeric actin in a 1:1 ratio.

The protein resides in the cytoplasm. The protein localises to the cytoskeleton. Its function is as follows. Binds to actin and affects the structure of the cytoskeleton. At high concentrations, profilin prevents the polymerization of actin, whereas it enhances it at low concentrations. By binding to PIP2, it inhibits the formation of IP3 and DG. This Malus domestica (Apple) protein is Profilin-1.